Consider the following 484-residue polypeptide: Cobyric acid synthase (484 aa).

One can recognise a GATase cobBQ-type domain in the interval 251 to 438 (ALKIAVPVLP…LHGLFASDAY (188 aa)). Cys333 serves as the catalytic Nucleophile. Residue His430 is part of the active site.

It belongs to the CobB/CobQ family. CobQ subfamily.

It participates in cofactor biosynthesis; adenosylcobalamin biosynthesis. Catalyzes amidations at positions B, D, E, and G on adenosylcobyrinic A,C-diamide. NH(2) groups are provided by glutamine, and one molecule of ATP is hydrogenolyzed for each amidation. The protein is Cobyric acid synthase of Rhizobium etli (strain CIAT 652).